We begin with the raw amino-acid sequence, 253 residues long: 5'/3'-nucleotidase SurE (253 aa).

Aspartate 8, aspartate 9, serine 39, and asparagine 92 together coordinate a divalent metal cation.

The protein belongs to the SurE nucleotidase family. Requires a divalent metal cation as cofactor.

The protein resides in the cytoplasm. The catalysed reaction is a ribonucleoside 5'-phosphate + H2O = a ribonucleoside + phosphate. It carries out the reaction a ribonucleoside 3'-phosphate + H2O = a ribonucleoside + phosphate. It catalyses the reaction [phosphate](n) + H2O = [phosphate](n-1) + phosphate + H(+). In terms of biological role, nucleotidase with a broad substrate specificity as it can dephosphorylate various ribo- and deoxyribonucleoside 5'-monophosphates and ribonucleoside 3'-monophosphates with highest affinity to 3'-AMP. Also hydrolyzes polyphosphate (exopolyphosphatase activity) with the preference for short-chain-length substrates (P20-25). Might be involved in the regulation of dNTP and NTP pools, and in the turnover of 3'-mononucleotides produced by numerous intracellular RNases (T1, T2, and F) during the degradation of various RNAs. The protein is 5'/3'-nucleotidase SurE of Escherichia coli O17:K52:H18 (strain UMN026 / ExPEC).